The following is a 313-amino-acid chain: Sorting nexin-20 (313 aa).

A disordered region spans residues 1-61; that stretch reads MASPQHPGGP…MTTRELQEHW (61 aa). Position 3 is a phosphoserine (serine 3). Over residues 29 to 38 the composition is skewed to pro residues; it reads PPGPDLPCPG. Polar residues predominate over residues 45–55; that stretch reads GPTSNSNMTTR. Residues 71-188 form the PX domain; that stretch reads VRLLFEIASA…DFLTRPELCE (118 aa). Positions 113, 115, 140, and 154 each coordinate a 1,2-diacyl-sn-glycero-3-phospho-(1D-myo-inositol-3-phosphate).

Belongs to the sorting nexin family. Interacts with SELPLG. Interaction with SELPLG is controversial.

Its subcellular location is the early endosome membrane. The protein localises to the cell membrane. It is found in the cytoplasm. The protein resides in the nucleus. May play a role in cellular vesicle trafficking. Has been proposed to function as a sorting protein that targets SELPLG into endosomes, but has no effect on SELPLG internalization from the cell surface, or on SELPLG-mediated cell-cell adhesion. The polypeptide is Sorting nexin-20 (Snx20) (Rattus norvegicus (Rat)).